The chain runs to 446 residues: Glutamine synthetase (446 aa).

Residues Glu-15 to Gly-103 enclose the GS beta-grasp domain. The 337-residue stretch at Pro-110–Tyr-446 folds into the GS catalytic domain. Residues Glu-134 and Glu-136 each contribute to the Mg(2+) site. ATP is bound at residue Glu-186. Residues Glu-191 and Glu-198 each coordinate Mg(2+). L-glutamate is bound by residues Asn-242 to Gly-243 and Gly-243. His-247 contributes to the Mg(2+) binding site. Residue Ser-251 coordinates ATP. Residues Arg-300, Glu-306, and Arg-318 each coordinate L-glutamate. ATP contacts are provided by Arg-318 and Arg-323. Glu-335 provides a ligand contact to Mg(2+). Arg-337 is a binding site for L-glutamate.

Belongs to the glutamine synthetase family. As to quaternary structure, interacts with GCBP (TTHA1554). The cofactor is Mg(2+).

The protein localises to the cytoplasm. The enzyme catalyses L-glutamate + NH4(+) + ATP = L-glutamine + ADP + phosphate + H(+). Its activity is regulated as follows. Activity increases by approximately two-fold in the presence of GCBP. Its function is as follows. Catalyzes the ATP-dependent biosynthesis of glutamine from glutamate and ammonia. The chain is Glutamine synthetase from Thermus thermophilus (strain ATCC 27634 / DSM 579 / HB8).